The primary structure comprises 29 residues: Dermaseptin-H7 (29 aa).

L29 carries the leucine amide modification.

Belongs to the frog skin active peptide (FSAP) family. Dermaseptin subfamily. As to expression, expressed by the skin glands.

It localises to the secreted. Has antibacterial activity against the Gram-negative bacterium E.coli and the Gram-positive bacterium S.aureus. Has antiprotozoal activity against L.amazonensis. Has antifungal activity. Has no hemolytic activity. This Pithecopus hypochondrialis (Orange-legged leaf frog) protein is Dermaseptin-H7.